Consider the following 133-residue polypeptide: ATP synthase epsilon chain (133 aa).

Belongs to the ATPase epsilon chain family. As to quaternary structure, F-type ATPases have 2 components, CF(1) - the catalytic core - and CF(0) - the membrane proton channel. CF(1) has five subunits: alpha(3), beta(3), gamma(1), delta(1), epsilon(1). CF(0) has three main subunits: a, b and c.

It is found in the cell membrane. Functionally, produces ATP from ADP in the presence of a proton gradient across the membrane. The polypeptide is ATP synthase epsilon chain (atpC) (Alkalihalophilus pseudofirmus (strain ATCC BAA-2126 / JCM 17055 / OF4) (Bacillus pseudofirmus)).